We begin with the raw amino-acid sequence, 294 residues long: 4-diphosphocytidyl-2-C-methyl-D-erythritol kinase (294 aa).

Lysine 16 is an active-site residue. Position 99–109 (proline 99–serine 109) interacts with ATP. Aspartate 141 is an active-site residue.

The protein belongs to the GHMP kinase family. IspE subfamily.

It catalyses the reaction 4-CDP-2-C-methyl-D-erythritol + ATP = 4-CDP-2-C-methyl-D-erythritol 2-phosphate + ADP + H(+). It participates in isoprenoid biosynthesis; isopentenyl diphosphate biosynthesis via DXP pathway; isopentenyl diphosphate from 1-deoxy-D-xylulose 5-phosphate: step 3/6. Its function is as follows. Catalyzes the phosphorylation of the position 2 hydroxy group of 4-diphosphocytidyl-2C-methyl-D-erythritol. This is 4-diphosphocytidyl-2-C-methyl-D-erythritol kinase from Polynucleobacter asymbioticus (strain DSM 18221 / CIP 109841 / QLW-P1DMWA-1) (Polynucleobacter necessarius subsp. asymbioticus).